Here is a 525-residue protein sequence, read N- to C-terminus: Vesicular inhibitory amino acid transporter (525 aa).

Residues 1 to 132 (MATLLRSKLT…WNVTNAIQGM (132 aa)) are Cytoplasmic-facing. A helical transmembrane segment spans residues 133–153 (FVLGLPYAILHGGYLGLFLII). The Lumenal, vesicle segment spans residues 154–204 (FAAVVCCYTGKILIACLYEENEDGEVVRVRDSYVAIANACCAPRFPTLGGR). 3'-nitrotyrosine is present on tyrosine 186. The helical transmembrane segment at 205-225 (VVNVAQIIELVMTCILYVVVS) threads the bilayer. Topologically, residues 226 to 265 (GNLMYNSFPGLPVSQKSWSIIATAVLLPCAFLKNLKAVSK) are cytoplasmic. Residues 266–286 (FSLLCTLAHFVINILVIAYCL) traverse the membrane as a helical segment. The Lumenal, vesicle portion of the chain corresponds to 287-305 (SRARDWAWEKVKFYIDVKK). Residues 306–326 (FPISIGIIVFSYTSQIFLPSL) form a helical membrane-spanning segment. Topologically, residues 327-341 (EGNMQQPSEFHCMMN) are cytoplasmic. A helical transmembrane segment spans residues 342–362 (WTHIAACVLKGLFALVAYLTW). The Lumenal, vesicle portion of the chain corresponds to 363 to 383 (ADETKEVITDNLPGSIRAVVN). The helical transmembrane segment at 384–404 (IFLVAKALLSYPLPFFAAVEV) threads the bilayer. Topologically, residues 405–438 (LEKSLFQEGSRAFFPACYGGDGRLKSWGLTLRCA) are cytoplasmic. A helical transmembrane segment spans residues 439-459 (LVVFTLLMAIYVPHFALLMGL). At 460–461 (TG) the chain is on the lumenal, vesicle side. The chain crosses the membrane as a helical span at residues 462 to 482 (SLTGAGLCFLLPSLFHLRLLW). Residues 483-489 (RKLLWHQ) lie on the Cytoplasmic side of the membrane. A helical membrane pass occupies residues 490 to 510 (VFFDVAIFVIGGICSVSGFVH). Residues 511-525 (SLEGLIEAYRTNAED) are Lumenal, vesicle-facing.

It belongs to the amino acid/polyamine transporter 2 family. Brain. Expressed at high levels within the neocortex, hippocampus, cerebellum, striatum, septal nuclei and the reticular nucleus of the thalamus. Also expressed in islets where it is more abundant in the peripheral/mantle region. Highly expressed in the nerve endings of GABA neurons in the brain and spinal cord but also in glycinergic nerve endings. Expressed in glycine-, GABA- or GABA- and glycine-containing boutons.

The protein resides in the cytoplasmic vesicle. The protein localises to the secretory vesicle. It localises to the synaptic vesicle membrane. It is found in the presynapse. The catalysed reaction is beta-alanine(out) + n H(+)(in) = beta-alanine(in) + n H(+)(out). The enzyme catalyses 4-aminobutanoate(out) + n H(+)(in) = 4-aminobutanoate(in) + n H(+)(out). It carries out the reaction glycine(out) + n H(+)(in) = glycine(in) + n H(+)(out). Antiporter that exchanges vesicular protons for cytosolic 4-aminobutanoate or to a lesser extend glycine, thus allowing their secretion from nerve terminals. The transport is equally dependent on the chemical and electrical components of the proton gradient. May also transport beta-alanine. Acidification of GABAergic synaptic vesicles is a prerequisite for 4-aminobutanoate uptake. The chain is Vesicular inhibitory amino acid transporter from Rattus norvegicus (Rat).